A 238-amino-acid polypeptide reads, in one-letter code: N-terminal acetyltransferase A complex catalytic subunit ARD1 (238 aa).

The N-acetyltransferase domain occupies 35–195 (YHILSWPEAS…DAYAMKKVLK (161 aa)).

It belongs to the acetyltransferase family. ARD1 subfamily. In terms of assembly, component of the N-terminal acetyltransferase A (NatA) complex, which is composed of ARD1, NAT1 and NAT5. Can self-associate.

The protein resides in the cytoplasm. The enzyme catalyses N-terminal glycyl-[protein] + acetyl-CoA = N-terminal N(alpha)-acetylglycyl-[protein] + CoA + H(+). It catalyses the reaction N-terminal L-alanyl-[protein] + acetyl-CoA = N-terminal N(alpha)-acetyl-L-alanyl-[protein] + CoA + H(+). It carries out the reaction N-terminal L-seryl-[protein] + acetyl-CoA = N-terminal N(alpha)-acetyl-L-seryl-[protein] + CoA + H(+). The catalysed reaction is N-terminal L-valyl-[protein] + acetyl-CoA = N-terminal N(alpha)-acetyl-L-valyl-[protein] + CoA + H(+). The enzyme catalyses N-terminal L-cysteinyl-[protein] + acetyl-CoA = N-terminal N(alpha)-acetyl-L-cysteinyl-[protein] + CoA + H(+). It catalyses the reaction N-terminal L-threonyl-[protein] + acetyl-CoA = N-terminal N(alpha)-acetyl-L-threonyl-[protein] + CoA + H(+). In terms of biological role, catalytic component of the NatA N-terminal acetyltransferase, which catalyzes acetylation of proteins beginning with Met-Ser, Met-Gly and Met-Ala. N-acetylation plays a role in normal eukaryotic translation and processing, protect against proteolytic degradation and protein turnover. The polypeptide is N-terminal acetyltransferase A complex catalytic subunit ARD1 (ARD1) (Saccharomyces cerevisiae (strain ATCC 204508 / S288c) (Baker's yeast)).